The following is a 1274-amino-acid chain: Regulator of telomere elongation helicase 1 (1274 aa).

The 290-residue stretch at N7–Q296 folds into the Helicase ATP-binding domain. S42–T49 contributes to the ATP binding site. 4 residues coordinate [4Fe-4S] cluster: C145, C163, C172, and C207. Positions K151–V167 match the Nuclear localization signal motif. A DEAH box motif is present at residues D250–H253. Positions Q871–K877 match the Nuclear localization signal motif. 3 disordered regions span residues N982–L1002, R1014–D1038, and E1143–I1198. A compositionally biased stretch (basic and acidic residues) spans Q1186–D1196.

The protein belongs to the helicase family. RAD3/XPD subfamily. Interacts with TERF1. Interacts (via PIP-box) with PCNA; the interaction is direct and essential for suppressing telomere fragility. Interacts with MMS19; the interaction mediates the association of RTEL1 with the cytosolic iron-sulfur protein assembly (CIA) complex.

It localises to the nucleus. The catalysed reaction is ATP + H2O = ADP + phosphate + H(+). Its function is as follows. A probable ATP-dependent DNA helicase implicated in telomere-length regulation, DNA repair and the maintenance of genomic stability. Acts as an anti-recombinase to counteract toxic recombination and limit crossover during meiosis. Regulates meiotic recombination and crossover homeostasis by physically dissociating strand invasion events and thereby promotes noncrossover repair by meiotic synthesis dependent strand annealing (SDSA) as well as disassembly of D loop recombination intermediates. Also disassembles T loops and prevents telomere fragility by counteracting telomeric G4-DNA structures, which together ensure the dynamics and stability of the telomere. This is Regulator of telomere elongation helicase 1 (Rtel1) from Rattus norvegicus (Rat).